Reading from the N-terminus, the 214-residue chain is MLDREGFRPNVGIILLNARNEVFWGKRLREHSWQFPQGGIKYGETPMQAMYRELHEETGLHPEHVKIIGRTRDWLRYEVPDKFIKREVRGHYRGQKQIWFLLRMVGRDCDICLRATDHPEFDAWRWNEYWVPLDAVIEFKRDVYQLALTELSRFLRRPAQRAEKPRGPRVSRYPRVIGAQAQTLTIVDASVVCSEIEVEASTLDEMPPRVIVGK.

The region spanning 6-149 (GFRPNVGIIL…KRDVYQLALT (144 aa)) is the Nudix hydrolase domain. The Nudix box signature appears at 38–59 (GGIKYGETPMQAMYRELHEETG).

This sequence belongs to the Nudix hydrolase family. RppH subfamily. Requires a divalent metal cation as cofactor.

Its function is as follows. Accelerates the degradation of transcripts by removing pyrophosphate from the 5'-end of triphosphorylated RNA, leading to a more labile monophosphorylated state that can stimulate subsequent ribonuclease cleavage. The protein is RNA pyrophosphohydrolase of Burkholderia cenocepacia (strain ATCC BAA-245 / DSM 16553 / LMG 16656 / NCTC 13227 / J2315 / CF5610) (Burkholderia cepacia (strain J2315)).